A 1057-amino-acid chain; its full sequence is Carbamoyl phosphate synthase large chain (1057 aa).

The tract at residues 1 to 401 (MPKRNDIKTI…SLLKAIRSLE (401 aa)) is carboxyphosphate synthetic domain. Residues Arg-129, Arg-169, Gly-175, Gly-176, Lys-208, Ile-210, Glu-215, Gly-241, Ile-242, His-243, Gln-284, and Glu-298 each contribute to the ATP site. The ATP-grasp 1 domain maps to 133–327 (RTLMNDLNVP…IAKLAAKIAV (195 aa)). Residues Gln-284, Glu-298, and Asn-300 each contribute to the Mg(2+) site. Residues Gln-284, Glu-298, and Asn-300 each coordinate Mn(2+). The segment at 402–546 (YGVHHLGLPN…YGTYETENES (145 aa)) is oligomerization domain. Positions 547–929 (IVTDKEKILV…ALFKGLTGSG (383 aa)) are carbamoyl phosphate synthetic domain. Residues 671-861 (EALLRKINVP…MAQLAMRAII (191 aa)) enclose the ATP-grasp 2 domain. ATP is bound by residues Arg-707, Arg-746, Leu-748, Glu-752, Gly-777, Val-778, His-779, Ser-780, Gln-820, and Glu-832. Positions 820, 832, and 834 each coordinate Mg(2+). 3 residues coordinate Mn(2+): Gln-820, Glu-832, and Asn-834. The region spanning 930 to 1057 (VEVKDHGTVL…ESMTFTMRQM (128 aa)) is the MGS-like domain. Positions 930-1057 (VEVKDHGTVL…ESMTFTMRQM (128 aa)) are allosteric domain.

This sequence belongs to the CarB family. In terms of assembly, composed of two chains; the small (or glutamine) chain promotes the hydrolysis of glutamine to ammonia, which is used by the large (or ammonia) chain to synthesize carbamoyl phosphate. Tetramer of heterodimers (alpha,beta)4. Requires Mg(2+) as cofactor. Mn(2+) is required as a cofactor.

It catalyses the reaction hydrogencarbonate + L-glutamine + 2 ATP + H2O = carbamoyl phosphate + L-glutamate + 2 ADP + phosphate + 2 H(+). The enzyme catalyses hydrogencarbonate + NH4(+) + 2 ATP = carbamoyl phosphate + 2 ADP + phosphate + 2 H(+). It participates in amino-acid biosynthesis; L-arginine biosynthesis; carbamoyl phosphate from bicarbonate: step 1/1. The protein operates within pyrimidine metabolism; UMP biosynthesis via de novo pathway; (S)-dihydroorotate from bicarbonate: step 1/3. Large subunit of the glutamine-dependent carbamoyl phosphate synthetase (CPSase). CPSase catalyzes the formation of carbamoyl phosphate from the ammonia moiety of glutamine, carbonate, and phosphate donated by ATP, constituting the first step of 2 biosynthetic pathways, one leading to arginine and/or urea and the other to pyrimidine nucleotides. The large subunit (synthetase) binds the substrates ammonia (free or transferred from glutamine from the small subunit), hydrogencarbonate and ATP and carries out an ATP-coupled ligase reaction, activating hydrogencarbonate by forming carboxy phosphate which reacts with ammonia to form carbamoyl phosphate. This chain is Carbamoyl phosphate synthase large chain, found in Staphylococcus aureus (strain MW2).